Consider the following 390-residue polypeptide: MVTVEEVRKAQRAEGPATVMAIGTAVPPNCVDQATYPDYYFRITNSEHKAELKEKFQRMCDKSQIKKRYMYLNEEVLKENPNMCAYMAPSLDARQDIVVVEVPKLGKEAAVKAIKEWGQPKSKITHLVFCTTSGVDMPGADYQLTKLLGLRPSVKRLMMYQQGCFAGGTVLRLAKDLAENNKGARVLVVCSEITAVTFRGPTDTHLDSLVGQALFGDGAAAIIIGSDPIPEVEKPLFELVSAAQTILPDSEGAIDGHLREVGLTFHLLKDVPGLISKNVEKSLTEAFKPLGISDWNSLFWIAHPGGPAILDQVEAKLSLKPEKLRATRHVLSEYGNMSSACVLFILDEMRRKSKEDGLKTTGEGIEWGVLFGFGPGLTVETVVLHSVAIN.

The active site involves C164.

This sequence belongs to the thiolase-like superfamily. Chalcone/stilbene synthases family.

The enzyme catalyses (E)-4-coumaroyl-CoA + 3 malonyl-CoA + 3 H(+) = 2',4,4',6'-tetrahydroxychalcone + 3 CO2 + 4 CoA. It functions in the pathway secondary metabolite biosynthesis; flavonoid biosynthesis. Functionally, the primary product of this enzyme is 4,2',4',6'-tetrahydroxychalcone (also termed naringenin-chalcone or chalcone) which undergoes enzyme-catalyzed or spontaneous isomerization into naringenin. The sequence is that of Chalcone synthase from Hypericum androsaemum (Tutsan).